The sequence spans 320 residues: ATP-dependent 6-phosphofructokinase (320 aa).

Gly-11 is a binding site for ATP. Position 21–25 (21–25 (RAVVR)) interacts with ADP. Residues 72-73 (RC) and 102-105 (GDGS) contribute to the ATP site. Asp-103 lines the Mg(2+) pocket. 125–127 (TID) contacts substrate. Asp-127 (proton acceptor) is an active-site residue. Arg-154 lines the ADP pocket. Substrate contacts are provided by residues Arg-162 and 169–171 (MGR). ADP-binding positions include 185–187 (GAE) and 214–216 (KTH). Substrate is bound by residues Glu-223, Arg-244, and 250–253 (HIQR).

It belongs to the phosphofructokinase type A (PFKA) family. ATP-dependent PFK group I subfamily. Prokaryotic clade 'B1' sub-subfamily. Homotetramer. Mg(2+) serves as cofactor.

The protein localises to the cytoplasm. It catalyses the reaction beta-D-fructose 6-phosphate + ATP = beta-D-fructose 1,6-bisphosphate + ADP + H(+). Its pathway is carbohydrate degradation; glycolysis; D-glyceraldehyde 3-phosphate and glycerone phosphate from D-glucose: step 3/4. With respect to regulation, allosterically activated by ADP and other diphosphonucleosides, and allosterically inhibited by phosphoenolpyruvate. Catalyzes the phosphorylation of D-fructose 6-phosphate to fructose 1,6-bisphosphate by ATP, the first committing step of glycolysis. The chain is ATP-dependent 6-phosphofructokinase from Clostridium botulinum (strain Alaska E43 / Type E3).